Reading from the N-terminus, the 194-residue chain is Probable GTP-binding protein EngB (194 aa).

In terms of domain architecture, EngB-type G spans 19–193 (DCIQICFWGR…VLFIEENIFK (175 aa)). Residues 27–34 (GRSNVGKS), 53–57 (GRTQF), 70–73 (DLPG), 137–140 (TKID), and 172–174 (VSS) each bind GTP. Ser-34 and Thr-55 together coordinate Mg(2+).

It belongs to the TRAFAC class TrmE-Era-EngA-EngB-Septin-like GTPase superfamily. EngB GTPase family. The cofactor is Mg(2+).

Its function is as follows. Necessary for normal cell division and for the maintenance of normal septation. In Mycoplasmopsis agalactiae (strain NCTC 10123 / CIP 59.7 / PG2) (Mycoplasma agalactiae), this protein is Probable GTP-binding protein EngB.